The primary structure comprises 325 residues: Tetraacyldisaccharide 4'-kinase (325 aa).

An ATP-binding site is contributed by 55–62 (TAGGNGKT).

This sequence belongs to the LpxK family.

It carries out the reaction a lipid A disaccharide + ATP = a lipid IVA + ADP + H(+). The protein operates within glycolipid biosynthesis; lipid IV(A) biosynthesis; lipid IV(A) from (3R)-3-hydroxytetradecanoyl-[acyl-carrier-protein] and UDP-N-acetyl-alpha-D-glucosamine: step 6/6. Functionally, transfers the gamma-phosphate of ATP to the 4'-position of a tetraacyldisaccharide 1-phosphate intermediate (termed DS-1-P) to form tetraacyldisaccharide 1,4'-bis-phosphate (lipid IVA). This chain is Tetraacyldisaccharide 4'-kinase, found in Citrobacter koseri (strain ATCC BAA-895 / CDC 4225-83 / SGSC4696).